The chain runs to 379 residues: Dual-specificity RNA methyltransferase RlmN (379 aa).

E97 functions as the Proton acceptor in the catalytic mechanism. In terms of domain architecture, Radical SAM core spans 103 to 343 (QGGRGTLCVS…VRTTRGDDID (241 aa)). The cysteines at positions 110 and 346 are disulfide-linked. C117, C121, and C124 together coordinate [4Fe-4S] cluster. S-adenosyl-L-methionine is bound by residues 171–172 (GE), S203, 225–227 (SLH), and N303. C346 functions as the S-methylcysteine intermediate in the catalytic mechanism.

This sequence belongs to the radical SAM superfamily. RlmN family. Requires [4Fe-4S] cluster as cofactor.

Its subcellular location is the cytoplasm. It catalyses the reaction adenosine(2503) in 23S rRNA + 2 reduced [2Fe-2S]-[ferredoxin] + 2 S-adenosyl-L-methionine = 2-methyladenosine(2503) in 23S rRNA + 5'-deoxyadenosine + L-methionine + 2 oxidized [2Fe-2S]-[ferredoxin] + S-adenosyl-L-homocysteine. It carries out the reaction adenosine(37) in tRNA + 2 reduced [2Fe-2S]-[ferredoxin] + 2 S-adenosyl-L-methionine = 2-methyladenosine(37) in tRNA + 5'-deoxyadenosine + L-methionine + 2 oxidized [2Fe-2S]-[ferredoxin] + S-adenosyl-L-homocysteine. Its function is as follows. Specifically methylates position 2 of adenine 2503 in 23S rRNA and position 2 of adenine 37 in tRNAs. m2A2503 modification seems to play a crucial role in the proofreading step occurring at the peptidyl transferase center and thus would serve to optimize ribosomal fidelity. The sequence is that of Dual-specificity RNA methyltransferase RlmN from Pseudomonas aeruginosa (strain ATCC 15692 / DSM 22644 / CIP 104116 / JCM 14847 / LMG 12228 / 1C / PRS 101 / PAO1).